The chain runs to 101 residues: Transcription factor ILI2 (101 aa).

The tract at residues 1–22 (MSSSRRSRTSSRLAAAPPPTDE) is disordered. Residues 8–63 (RTSSRLAAAPPPTDEQMAELISKLQAVLPTRGGEANAKQASSAEVLQEACRYIRRL) form the bHLH domain.

The protein belongs to the bHLH protein family.

In terms of biological role, atypical and probable non DNA-binding bHLH transcription factor that integrates multiple signaling pathways to regulate cell elongation and plant development. The polypeptide is Transcription factor ILI2 (ILI2) (Oryza sativa subsp. indica (Rice)).